The sequence spans 36 residues: Photosystem I reaction center subunit VIII (36 aa).

The helical transmembrane segment at 9–29 (ISVPLVGLVFPAITMVLSFIY) threads the bilayer.

Belongs to the PsaI family.

The protein resides in the plastid. Its subcellular location is the chloroplast thylakoid membrane. Functionally, may help in the organization of the PsaL subunit. This is Photosystem I reaction center subunit VIII from Huperzia lucidula (Shining clubmoss).